Consider the following 373-residue polypeptide: Spermidine/putrescine import ATP-binding protein PotA (373 aa).

The ABC transporter domain occupies 6-236 (LSLSNLTKQF…PANLFTARFV (231 aa)). Residue 38-45 (GPSGCGKT) coordinates ATP.

It belongs to the ABC transporter superfamily. Spermidine/putrescine importer (TC 3.A.1.11.1) family. The complex is composed of two ATP-binding proteins (PotA), two transmembrane proteins (PotB and PotC) and a solute-binding protein (PotD).

The protein localises to the cell inner membrane. It carries out the reaction ATP + H2O + polyamine-[polyamine-binding protein]Side 1 = ADP + phosphate + polyamineSide 2 + [polyamine-binding protein]Side 1.. Functionally, part of the ABC transporter complex PotABCD involved in spermidine/putrescine import. Responsible for energy coupling to the transport system. In Marinobacter nauticus (strain ATCC 700491 / DSM 11845 / VT8) (Marinobacter aquaeolei), this protein is Spermidine/putrescine import ATP-binding protein PotA.